Consider the following 207-residue polypeptide: FMN-dependent NADH:quinone oxidoreductase 3 (207 aa).

Residues serine 10 and 16–18 (SIS) each bind FMN.

The protein belongs to the azoreductase type 1 family. Homodimer. Requires FMN as cofactor.

The catalysed reaction is 2 a quinone + NADH + H(+) = 2 a 1,4-benzosemiquinone + NAD(+). It carries out the reaction N,N-dimethyl-1,4-phenylenediamine + anthranilate + 2 NAD(+) = 2-(4-dimethylaminophenyl)diazenylbenzoate + 2 NADH + 2 H(+). In terms of biological role, quinone reductase that provides resistance to thiol-specific stress caused by electrophilic quinones. Functionally, also exhibits azoreductase activity. Catalyzes the reductive cleavage of the azo bond in aromatic azo compounds to the corresponding amines. This chain is FMN-dependent NADH:quinone oxidoreductase 3, found in Burkholderia lata (strain ATCC 17760 / DSM 23089 / LMG 22485 / NCIMB 9086 / R18194 / 383).